Reading from the N-terminus, the 138-residue chain is Phosphoribosyl-AMP cyclohydrolase (138 aa).

Asp84 contributes to the Mg(2+) binding site. Cys85 contributes to the Zn(2+) binding site. Mg(2+) is bound by residues Asp86 and Asp88. Residues Cys102 and Cys109 each coordinate Zn(2+).

It belongs to the PRA-CH family. Homodimer. Requires Mg(2+) as cofactor. It depends on Zn(2+) as a cofactor.

The protein resides in the cytoplasm. The catalysed reaction is 1-(5-phospho-beta-D-ribosyl)-5'-AMP + H2O = 1-(5-phospho-beta-D-ribosyl)-5-[(5-phospho-beta-D-ribosylamino)methylideneamino]imidazole-4-carboxamide. It participates in amino-acid biosynthesis; L-histidine biosynthesis; L-histidine from 5-phospho-alpha-D-ribose 1-diphosphate: step 3/9. In terms of biological role, catalyzes the hydrolysis of the adenine ring of phosphoribosyl-AMP. The polypeptide is Phosphoribosyl-AMP cyclohydrolase (Burkholderia ambifaria (strain ATCC BAA-244 / DSM 16087 / CCUG 44356 / LMG 19182 / AMMD) (Burkholderia cepacia (strain AMMD))).